The primary structure comprises 472 residues: Aspartyl/glutamyl-tRNA(Asn/Gln) amidotransferase subunit B (472 aa).

This sequence belongs to the GatB/GatE family. GatB subfamily. In terms of assembly, heterotrimer of A, B and C subunits.

The enzyme catalyses L-glutamyl-tRNA(Gln) + L-glutamine + ATP + H2O = L-glutaminyl-tRNA(Gln) + L-glutamate + ADP + phosphate + H(+). The catalysed reaction is L-aspartyl-tRNA(Asn) + L-glutamine + ATP + H2O = L-asparaginyl-tRNA(Asn) + L-glutamate + ADP + phosphate + 2 H(+). Allows the formation of correctly charged Asn-tRNA(Asn) or Gln-tRNA(Gln) through the transamidation of misacylated Asp-tRNA(Asn) or Glu-tRNA(Gln) in organisms which lack either or both of asparaginyl-tRNA or glutaminyl-tRNA synthetases. The reaction takes place in the presence of glutamine and ATP through an activated phospho-Asp-tRNA(Asn) or phospho-Glu-tRNA(Gln). This is Aspartyl/glutamyl-tRNA(Asn/Gln) amidotransferase subunit B from Campylobacter jejuni (strain RM1221).